Consider the following 476-residue polypeptide: Ovarian-specific serine/threonine-protein kinase Lok (476 aa).

In terms of domain architecture, FHA spans 69 to 129; sequence FTAGRGEAND…NGTFVNNEKI (61 aa). In terms of domain architecture, Protein kinase spans 174–441; sequence YYVNRKLGSG…IDDVLQSSWL (268 aa). Residues 180–188 and Lys203 each bind ATP; that span reads LGSGAYGLV. Asp303 functions as the Proton acceptor in the catalytic mechanism.

Belongs to the protein kinase superfamily. CAMK Ser/Thr protein kinase family. CDS1 subfamily. In terms of tissue distribution, in stage 3 embryos, both isoforms are expressed in both somatic and pole cell nuclei. Expression in pole cell nuclei is sustained until stage 9 and weakly expressed after pole cell invagination into the abdominal cavity.

It is found in the nucleus speckle. The enzyme catalyses L-seryl-[protein] + ATP = O-phospho-L-seryl-[protein] + ADP + H(+). It catalyses the reaction L-threonyl-[protein] + ATP = O-phospho-L-threonyl-[protein] + ADP + H(+). May have a role in germline establishment. This is Ovarian-specific serine/threonine-protein kinase Lok (lok) from Drosophila melanogaster (Fruit fly).